The primary structure comprises 421 residues: Phosphoglycerate kinase (421 aa).

(2R)-3-phosphoglycerate contacts are provided by Val-23, Asp-24, Phe-25, Asn-26, Gln-41, Arg-42, Ser-65, His-66, Gly-68, Arg-69, Leu-124, Arg-125, His-172, and Arg-173. Gly-216 contacts ADP. Gly-216 contributes to the CDP binding site. Lys-218 contributes to the AMP binding site. Asp-221 is a CDP binding site. Asp-221 is a binding site for Mg(2+). Lys-222 serves as a coordination point for AMP. Position 222 (Lys-222) interacts with ATP. Residue Gly-240 participates in ADP binding. A CDP-binding site is contributed by Gly-240. 2 residues coordinate AMP: Gly-241 and Gly-315. Gly-241 and Gly-315 together coordinate ATP. 2 residues coordinate CDP: Gly-340 and Phe-345. An ADP-binding site is contributed by Phe-345. Glu-346 contacts AMP. ATP contacts are provided by Glu-346, Asp-377, and Thr-378. Asp-377 contributes to the Mg(2+) binding site.

The protein belongs to the phosphoglycerate kinase family. Monomer. Mg(2+) serves as cofactor.

The protein localises to the cytoplasm. It localises to the mitochondrion. The catalysed reaction is (2R)-3-phosphoglycerate + ATP = (2R)-3-phospho-glyceroyl phosphate + ADP. Its pathway is carbohydrate degradation; glycolysis; pyruvate from D-glyceraldehyde 3-phosphate: step 2/5. In terms of biological role, catalyzes one of the two ATP producing reactions in the glycolytic pathway via the reversible conversion of 1,3-diphosphoglycerate to 3-phosphoglycerate. Both L- and D- forms of purine and pyrimidine nucleotides can be used as substrates, but the activity is much lower on pyrimidines. Negatively regulates the biosynthesis of acetyl-CoA from pyruvate in the mitochondrion. The polypeptide is Phosphoglycerate kinase (pgkA) (Emericella nidulans (strain FGSC A4 / ATCC 38163 / CBS 112.46 / NRRL 194 / M139) (Aspergillus nidulans)).